A 62-amino-acid chain; its full sequence is Temporin-HN1 (62 aa).

The N-terminal stretch at 1 to 22 (MFTLKKSLLLLLFLGTINLSLS) is a signal peptide. Positions 23 to 44 (EQERNAEEERRDDPEEMDAEVE) are excised as a propeptide. At Leu60 the chain carries Leucine amide.

Expressed by the skin glands.

Its subcellular location is the secreted. Has antimicrobial activity against some Gram-positive bacteria and fungi but has no activity against a range of Gram-negative bacteria except P.faecalis. Active against the Gram-positive bacteria S.aureus ATCC 25923 (MIC=37.5 uM), S.carnosus KHS (MIC=37.5 uM), B.licheniformis X39 (MIC=19 uM), R.rhodochrous X15 (MIC=4.8 uM), is virtually inactive against E.faecalis 981 (MIC=150 uM) and inactive against E.faecium 091299. Has some antimicrobial activity against the Gram-negative bacterium P.faecalis X29 (MIC=75 uM) and is inactive against E.coli, P.aeruginosa and S.typhi. Has antifungal activity against C.albicans ATCC 2002 (MIC=19 uM) and lower activity against the slime mold 090223 (MIC=75 uM). Has low hemolytic activity against human erythrocytes (LC(50)=75 uM). This chain is Temporin-HN1, found in Odorrana hainanensis (Odor frog).